The following is a 303-amino-acid chain: N-acetyl-D-glucosamine kinase (303 aa).

Residues glycine 4–lysine 11 and glycine 133–leucine 140 each bind ATP. Zn(2+) contacts are provided by histidine 157, cysteine 177, cysteine 179, and cysteine 184.

This sequence belongs to the ROK (NagC/XylR) family. NagK subfamily.

It catalyses the reaction N-acetyl-D-glucosamine + ATP = N-acetyl-D-glucosamine 6-phosphate + ADP + H(+). It participates in cell wall biogenesis; peptidoglycan recycling. Its function is as follows. Catalyzes the phosphorylation of N-acetyl-D-glucosamine (GlcNAc) derived from cell-wall degradation, yielding GlcNAc-6-P. In Salmonella newport (strain SL254), this protein is N-acetyl-D-glucosamine kinase.